The chain runs to 213 residues: Small ribosomal subunit protein uS3 (213 aa).

Residues 38–106 (IRSYIKKLLY…EFSLEVTEVR (69 aa)) form the KH type-2 domain.

Belongs to the universal ribosomal protein uS3 family. In terms of assembly, part of the 30S ribosomal subunit. Forms a tight complex with proteins S10 and S14.

Its function is as follows. Binds the lower part of the 30S subunit head. Binds mRNA in the 70S ribosome, positioning it for translation. In Lawsonia intracellularis (strain PHE/MN1-00), this protein is Small ribosomal subunit protein uS3.